The chain runs to 67 residues: Andropin (67 aa).

The signal sequence occupies residues 1-19 (MKYFLVLVVLTLILAISVG).

The protein belongs to the andropin family. In terms of tissue distribution, ejaculatory duct of adult males.

The protein localises to the secreted. In terms of biological role, male-specific peptide with moderate activity against Gram-positive bacteria. This is Andropin (Anp) from Drosophila orena (Fruit fly).